A 416-amino-acid chain; its full sequence is uncharacterized protein (416 aa).

Positions 341-360 are disordered; sequence EDREKGSQHTNNTHHHKRNL.

This is an uncharacterized protein from Human cytomegalovirus (strain AD169) (HHV-5).